The following is an 854-amino-acid chain: Arsenate respiratory reductase molybdopterin-containing subunit ArrA (854 aa).

The tat-type signal signal peptide spans 1 to 41 (MKKENQVNLGRRQLLKSTAAGTVLTGIGGTLSFTPIVEGIA). The region spanning 54 to 110 (GEWLATTCQGCTSWCAKQIYVMDGRALKVRGNPNSGVHGMSSCPRQHLSLQQVYDPD) is the 4Fe-4S Mo/W bis-MGD-type domain. [4Fe-4S] cluster is bound by residues Cys-61, Cys-64, Cys-68, and Cys-96. Arsenite is bound at residue Arg-165. Tyr-166 is a binding site for arsenate. His-189 lines the arsenite pocket. Ser-190 contacts arsenate. Cys-193 provides a ligand contact to Mo-bis(molybdopterin guanine dinucleotide). Lys-198 serves as a coordination point for arsenate. Tyr-210 contacts arsenite.

It belongs to the prokaryotic molybdopterin-containing oxidoreductase family. As to quaternary structure, heterodimer composed of one large subunit (ArrA) and one small subunit (ArrB). Requires [4Fe-4S] cluster as cofactor. It depends on Mo-bis(molybdopterin guanine dinucleotide) as a cofactor. Predicted to be exported by the Tat system. The position of the signal peptide cleavage has not been experimentally proven.

It is found in the periplasm. The enzyme catalyses arsenite + A + H2O = arsenate + AH2 + H(+). With respect to regulation, phosphate is a competitive inhibitor. Functionally, component of the arsenate respiratory reductase (Arr) complex, which catalyzes the reduction of arsenate (As(V)) to arsenite (As(III)). ArrA is the arsenate-binding subunit. The periplasmic localization of this complex may allow the cell to couple arsenate reduction to energy production before arsenate can be transported to the cell cytoplasm and enter the ars detoxification pathway, an energy-requiring process. The polypeptide is Arsenate respiratory reductase molybdopterin-containing subunit ArrA (Shewanella sp. (strain ANA-3)).